The chain runs to 165 residues: Large ribosomal subunit protein uL10 (165 aa).

It belongs to the universal ribosomal protein uL10 family. Part of the ribosomal stalk of the 50S ribosomal subunit. The N-terminus interacts with L11 and the large rRNA to form the base of the stalk. The C-terminus forms an elongated spine to which L12 dimers bind in a sequential fashion forming a multimeric L10(L12)X complex.

Its function is as follows. Forms part of the ribosomal stalk, playing a central role in the interaction of the ribosome with GTP-bound translation factors. The protein is Large ribosomal subunit protein uL10 of Edwardsiella ictaluri (strain 93-146).